Reading from the N-terminus, the 214-residue chain is Protein get-1 (214 aa).

Residues 1–4 (MPSL) lie on the Lumenal side of the membrane. Residues 5-24 (LVVIFVIELFVQLVNTIGAA) traverse the membrane as a helical segment. Over 25–110 (TINNLLWRIA…KFDRTLTTVR (86 aa)) the chain is Cytoplasmic. Residues 73–107 (KWARLRRQHDKLLEDLEKRKKELDAAKTKFDRTLT) adopt a coiled-coil conformation. The chain crosses the membrane as a helical span at residues 111–131 (VVATRGLQWFLPFWYSREPMF). At 132 to 155 (WLPYGWFPYYVEWFASFPRAPLGS) the chain is on the lumenal side. A helical transmembrane segment spans residues 156–172 (VSIVVWQWACTGVIKLV). The Cytoplasmic segment spans residues 173–214 (IETVMAVVGLIVAARQKQQEKQKAKQAVPAAGGGDSKAEEAK). Residues 190–214 (QQEKQKAKQAVPAAGGGDSKAEEAK) are disordered.

Belongs to the WRB/GET1 family. As to quaternary structure, interacts with GET3.

It is found in the endoplasmic reticulum membrane. Functionally, required for the post-translational delivery of tail-anchored (TA) proteins to the endoplasmic reticulum. Acts as a membrane receptor for soluble GET3, which recognizes and selectively binds the transmembrane domain of TA proteins in the cytosol. This chain is Protein get-1 (get-1), found in Neurospora crassa (strain ATCC 24698 / 74-OR23-1A / CBS 708.71 / DSM 1257 / FGSC 987).